Consider the following 778-residue polypeptide: Acyl-homoserine lactone acylase PvdQ (778 aa).

Positions Met-1 to Ala-25 are cleaved as a signal peptide. A propeptide spans Ile-196–Gly-218 (spacer peptide). The active-site Nucleophile is the Ser-219.

Belongs to the peptidase S45 family. Heterodimer of an alpha subunit and a beta subunit processed from the same precursor.

It is found in the periplasm. The catalysed reaction is an N-acyl-L-homoserine lactone + H2O = L-homoserine lactone + a carboxylate. Its function is as follows. Catalyzes the deacylation of acyl-homoserine lactone (AHL or acyl-HSL), releasing homoserine lactone (HSL) and the corresponding fatty acid. Possesses a specificity for the degradation of long-chain acyl-HSLs (side chains of 11 to 14 carbons in length). In Pseudomonas fluorescens (strain Pf0-1), this protein is Acyl-homoserine lactone acylase PvdQ (pvdQ).